The primary structure comprises 316 residues: Adenine deaminase (316 aa).

The Zn(2+) site is built by His-14, His-16, and His-194. The active-site Proton donor is Glu-197. Position 275 (Asp-275) interacts with Zn(2+). Residue Asp-276 participates in substrate binding.

The protein belongs to the metallo-dependent hydrolases superfamily. Adenosine and AMP deaminases family. Adenine deaminase type 2 subfamily. It depends on Zn(2+) as a cofactor.

The enzyme catalyses adenine + H2O + H(+) = hypoxanthine + NH4(+). Its function is as follows. Catalyzes the hydrolytic deamination of adenine to hypoxanthine. Plays an important role in the purine salvage pathway and in nitrogen catabolism. This is Adenine deaminase from Bordetella avium (strain 197N).